We begin with the raw amino-acid sequence, 321 residues long: MKRWKDRRTGLLLPLVLLLFGACSSLAWVCGRRMSSRSQQLNNASAIVEGKPASAIVGGKPANILEFPWHVGIMNHGSHLCGGSILNEWWVLSASHCFDQLNNSKLEIIHGTEDLSTKGIKYQKVDKLFLHPKFDDWLLDNDIALLLLKSPLNLSVNRIPICTSEISDIQAWRNCWVTGWGITNTSEKGVQPTILQAVKVDLYRWDWCGYILSLLTKNMLCAGTQDPGKDACQGDSGGALVCNKKRNTAIWYQVGIVSWGMGCGKKNLPGVYTKVSHYVRWISKQTAKAGRPYMYEQNSACPLVLSCRAILFLYFVMFLLT.

An N-terminal signal peptide occupies residues 1–27 (MKRWKDRRTGLLLPLVLLLFGACSSLA). The Peptidase S1 domain maps to 56 to 287 (IVGGKPANIL…YVRWISKQTA (232 aa)). Cysteines 81 and 97 form a disulfide. Catalysis depends on charge relay system residues histidine 96 and aspartate 142. N-linked (GlcNAc...) asparagine glycosylation occurs at asparagine 153. Cystine bridges form between cysteine 175–cysteine 242, cysteine 208–cysteine 221, and cysteine 232–cysteine 263. The active-site Charge relay system is serine 236. The helical transmembrane segment at 300–320 (ACPLVLSCRAILFLYFVMFLL) threads the bilayer.

Belongs to the peptidase S1 family.

Its subcellular location is the membrane. In terms of biological role, probable serine protease. In Mus musculus (Mouse), this protein is Serine protease 52 (Prss52).